The sequence spans 146 residues: uncharacterized protein (146 aa).

In terms of domain architecture, N-acetyltransferase spans 7–146; sequence LQINYKTDEL…EGHDILIWNP (140 aa).

This is an uncharacterized protein from Staphylococcus epidermidis (strain ATCC 35984 / DSM 28319 / BCRC 17069 / CCUG 31568 / BM 3577 / RP62A).